Reading from the N-terminus, the 428-residue chain is Serine--tRNA ligase (428 aa).

Position 231–233 (231–233 (TAE)) interacts with L-serine. An ATP-binding site is contributed by 262–264 (RSE). Glutamate 285 provides a ligand contact to L-serine. ATP is bound at residue 349–352 (EISS). Residue serine 385 coordinates L-serine.

It belongs to the class-II aminoacyl-tRNA synthetase family. Type-1 seryl-tRNA synthetase subfamily. In terms of assembly, homodimer. The tRNA molecule binds across the dimer.

It is found in the cytoplasm. The enzyme catalyses tRNA(Ser) + L-serine + ATP = L-seryl-tRNA(Ser) + AMP + diphosphate + H(+). It carries out the reaction tRNA(Sec) + L-serine + ATP = L-seryl-tRNA(Sec) + AMP + diphosphate + H(+). Its pathway is aminoacyl-tRNA biosynthesis; selenocysteinyl-tRNA(Sec) biosynthesis; L-seryl-tRNA(Sec) from L-serine and tRNA(Sec): step 1/1. In terms of biological role, catalyzes the attachment of serine to tRNA(Ser). Is also able to aminoacylate tRNA(Sec) with serine, to form the misacylated tRNA L-seryl-tRNA(Sec), which will be further converted into selenocysteinyl-tRNA(Sec). This chain is Serine--tRNA ligase, found in Staphylococcus carnosus (strain TM300).